The chain runs to 489 residues: Glycogen synthase (489 aa).

Arginine 20 is a binding site for ADP-alpha-D-glucose.

This sequence belongs to the glycosyltransferase 1 family. Bacterial/plant glycogen synthase subfamily.

The catalysed reaction is [(1-&gt;4)-alpha-D-glucosyl](n) + ADP-alpha-D-glucose = [(1-&gt;4)-alpha-D-glucosyl](n+1) + ADP + H(+). The protein operates within glycan biosynthesis; glycogen biosynthesis. In terms of biological role, synthesizes alpha-1,4-glucan chains using ADP-glucose. In Chlorobium limicola (strain DSM 245 / NBRC 103803 / 6330), this protein is Glycogen synthase.